The following is a 476-amino-acid chain: Ataxin-10 (476 aa).

An Omega-N-methylarginine modification is found at R10. A phosphoserine mark is found at S13 and S78. T83 carries the post-translational modification Phosphothreonine. S431 is modified (phosphoserine).

Belongs to the ataxin-10 family. In terms of assembly, homooligomer. Interacts with GNB2. Interacts with IQCB1. Interacts with OGT. Post-translationally, polyubiquitinated. Phosphorylation at Ser-13 by AURKB promotes the association of ATXN10 with PLK1. Phosphorylation at Ser-78 and Thr-83 by PLK1 may play a role in the regulation of cytokinesis and may stimulate the proteasome-mediated degradation of ATXN10.

It is found in the cytoplasm. It localises to the perinuclear region. The protein localises to the midbody. Its subcellular location is the cytoskeleton. The protein resides in the cilium basal body. It is found in the microtubule organizing center. It localises to the centrosome. The protein localises to the centriole. Its function is as follows. May play a role in the regulation of cytokinesis. May play a role in signaling by stimulating protein glycosylation. Induces neuritogenesis by activating the Ras-MAP kinase pathway and is necessary for the survival of cerebellar neurons. Does not appear to play a major role in ciliogenesis. The sequence is that of Ataxin-10 (ATXN10) from Pongo abelii (Sumatran orangutan).